A 306-amino-acid polypeptide reads, in one-letter code: Palmitoyl-protein thioesterase 1 (306 aa).

The signal sequence occupies residues 1–27 (MASSCSRRLLAAALLPWCCAAWALGHL). 3 cysteine pairs are disulfide-bonded: Cys-45-Cys-46, Cys-96-Cys-128, and Cys-152-Cys-160. Residue Ser-115 is part of the active site. Residues Asn-197, Asn-212, and Asn-232 are each glycosylated (N-linked (GlcNAc...) asparagine). Active-site residues include Asp-233 and His-289.

This sequence belongs to the palmitoyl-protein thioesterase family. Interacts with CLN5, ATP5F1A and ATP5F1B. Post-translationally, glycosylated. In terms of tissue distribution, highest level in testis and kidney, lower in heart, brain and lung and lowest in skeletal muscle.

It localises to the lysosome. Its subcellular location is the secreted. The protein resides in the golgi apparatus. It is found in the endoplasmic reticulum. It catalyses the reaction S-hexadecanoyl-L-cysteinyl-[protein] + H2O = L-cysteinyl-[protein] + hexadecanoate + H(+). It carries out the reaction hexadecanoyl-CoA + H2O = hexadecanoate + CoA + H(+). The catalysed reaction is S-hexadecanoyl-N-acetylcysteamine + H2O = N-acetylcysteamine + hexadecanoate + H(+). The enzyme catalyses S-hexadecanoyl-N-acetylcysteine methyl ester + H2O = N-acetylcysteine methyl ester + hexadecanoate + H(+). Its function is as follows. Has thioesterase activity against fatty acid thioesters with 14 -18 carbons, including palmitoyl-CoA, S-palmitoyl-N-acetylcysteamine, and palmitoylated proteins. In contrast to PPT2, PPT1 can hydrolyze palmitoylated proteins and palmitoylcysteine. The chain is Palmitoyl-protein thioesterase 1 (Ppt1) from Mus musculus (Mouse).